An 82-amino-acid chain; its full sequence is Leucinostatins biosynthesis cluster protein M (82 aa).

Positions 34–82 (ARNETHDPSGPRAPVSSMRLGPRSRPYHHGTARLRGSPNCSRDSSSAAT) are disordered. The span at 71 to 82 (PNCSRDSSSAAT) shows a compositional bias: polar residues.

Functionally, part of the gene cluster that mediates the biosynthesis of the lipopeptide antibiotics leucinostatins that show extensive biological activities, including antimalarial, antiviral, antibacterial, antifungal, and antitumor activities, as well as phytotoxic. The function of lcsM within the leucinostatins biosynthesis has not been identified yet. The chain is Leucinostatins biosynthesis cluster protein M from Purpureocillium lilacinum (Paecilomyces lilacinus).